Here is a 430-residue protein sequence, read N- to C-terminus: Lipoyl synthase, mitochondrial (430 aa).

A mitochondrion-targeting transit peptide spans 1–37 (MAASTGKLRTLFSAHSSLSARPSSALPALRLTILRSY). The span at 40 to 56 (TTPPDSSISNPSNPSTT) shows a compositional bias: low complexity. Residues 40–64 (TTPPDSSISNPSNPSTTVKRPPTAF) are disordered. [4Fe-4S] cluster contacts are provided by Cys-141, Cys-146, Cys-152, Cys-172, Cys-176, Cys-179, and Ser-387. A Radical SAM core domain is found at 155–376 (GSSKSAATAT…KERALEMGFL (222 aa)).

The protein belongs to the radical SAM superfamily. Lipoyl synthase family. The cofactor is [4Fe-4S] cluster.

It localises to the mitochondrion. It carries out the reaction [[Fe-S] cluster scaffold protein carrying a second [4Fe-4S](2+) cluster] + N(6)-octanoyl-L-lysyl-[protein] + 2 oxidized [2Fe-2S]-[ferredoxin] + 2 S-adenosyl-L-methionine + 4 H(+) = [[Fe-S] cluster scaffold protein] + N(6)-[(R)-dihydrolipoyl]-L-lysyl-[protein] + 4 Fe(3+) + 2 hydrogen sulfide + 2 5'-deoxyadenosine + 2 L-methionine + 2 reduced [2Fe-2S]-[ferredoxin]. It functions in the pathway protein modification; protein lipoylation via endogenous pathway; protein N(6)-(lipoyl)lysine from octanoyl-[acyl-carrier-protein]: step 2/2. In terms of biological role, catalyzes the radical-mediated insertion of two sulfur atoms into the C-6 and C-8 positions of the octanoyl moiety bound to the lipoyl domains of lipoate-dependent enzymes, thereby converting the octanoylated domains into lipoylated derivatives. The polypeptide is Lipoyl synthase, mitochondrial (Blastomyces gilchristii (strain SLH14081) (Blastomyces dermatitidis)).